We begin with the raw amino-acid sequence, 61 residues long: Cecropin-D (61 aa).

A signal peptide spans 1–22; it reads MKFSKIFVFVFAIVFATASVSA. A propeptide spans 23–24 (removed by a dipeptidylpeptidase); the sequence is AP. A Glutamine amide modification is found at glutamine 60.

Belongs to the cecropin family. Mainly in fat body. Lower in hemocytes. Not expressed in midguts, malpighian tubules and silk glands.

It localises to the secreted. Functionally, cecropins have lytic and antibacterial activity against several Gram-positive and Gram-negative bacteria. The sequence is that of Cecropin-D (CECD) from Bombyx mori (Silk moth).